Here is a 205-residue protein sequence, read N- to C-terminus: Small ribosomal subunit protein uS4 (205 aa).

Basic and acidic residues predominate over residues 1–16 (MSKRESSKYKIDRRMG). Residues 1–46 (MSKRESSKYKIDRRMGENIWGRPKSPVNRREYGPGQHGQRRKGKLS) are disordered. The region spanning 94–157 (SRLDAIVYRA…KQLVIVLEAV (64 aa)) is the S4 RNA-binding domain.

Belongs to the universal ribosomal protein uS4 family. In terms of assembly, part of the 30S ribosomal subunit. Contacts protein S5. The interaction surface between S4 and S5 is involved in control of translational fidelity.

Its function is as follows. One of the primary rRNA binding proteins, it binds directly to 16S rRNA where it nucleates assembly of the body of the 30S subunit. Functionally, with S5 and S12 plays an important role in translational accuracy. The protein is Small ribosomal subunit protein uS4 of Rhizobium johnstonii (strain DSM 114642 / LMG 32736 / 3841) (Rhizobium leguminosarum bv. viciae).